Consider the following 618-residue polypeptide: COMPASS component cclA (618 aa).

The interval 1–91 (MSSIQPVGSS…KKAAVAPNSA (91 aa)) is disordered. 2 stretches are compositionally biased toward low complexity: residues 8 to 19 (GSSGPSSNINSP) and 37 to 49 (NARSSPAPPSNAS). The segment covering 57–69 (SKRNKRDSRKKRE) has biased composition (basic residues). Residues 157–368 (IADPGFPHIK…QSNVFSTKHL (212 aa)) form the B30.2/SPRY domain. The disordered stretch occupies residues 588 to 618 (TLSVGHEGSPNPATPSAPLENTVPTEDVEMS).

This sequence belongs to the cclA family. As to quaternary structure, component of the COMPASS complex.

The protein localises to the nucleus. It localises to the chromosome. The protein resides in the telomere. In terms of biological role, component of the COMPASS (Set1C) complex that specifically mono-, di- and trimethylates histone H3 to form H3K4me1/2/3, which subsequently plays a role in telomere length maintenance and transcription elongation regulation. Controls the production of several secondary metabolites, including gliotoxin, but does not contribute to pathogenicity. The protein is COMPASS component cclA of Aspergillus fumigatus (strain ATCC MYA-4609 / CBS 101355 / FGSC A1100 / Af293) (Neosartorya fumigata).